Reading from the N-terminus, the 144-residue chain is Large ribosomal subunit protein uL13 (144 aa).

This sequence belongs to the universal ribosomal protein uL13 family. In terms of assembly, part of the 50S ribosomal subunit.

Its function is as follows. This protein is one of the early assembly proteins of the 50S ribosomal subunit, although it is not seen to bind rRNA by itself. It is important during the early stages of 50S assembly. This Syntrophomonas wolfei subsp. wolfei (strain DSM 2245B / Goettingen) protein is Large ribosomal subunit protein uL13.